The chain runs to 474 residues: Nuclear hormone receptor family member nhr-91 (474 aa).

Residues 50 to 69 (SMTPSFSQTESPNSETDDST) are disordered. Over residues 51–69 (MTPSFSQTESPNSETDDST) the composition is skewed to polar residues. The segment at residues 97 to 172 (SKLCSVCGDK…KGMLTEAVRE (76 aa)) is a DNA-binding region (nuclear receptor). 2 NR C4-type zinc fingers span residues 100 to 120 (CSVC…CEGC) and 136 to 155 (CSQD…CQSC). Residues 215–474 (SGKKLIKELV…KNPRRLVFDE (260 aa)) enclose the NR LBD domain.

This sequence belongs to the nuclear hormone receptor family.

Its subcellular location is the nucleus. In terms of biological role, orphan nuclear receptor. The polypeptide is Nuclear hormone receptor family member nhr-91 (nhr-91) (Caenorhabditis elegans).